Consider the following 252-residue polypeptide: 5-oxoprolinase subunit A (252 aa).

This sequence belongs to the LamB/PxpA family. As to quaternary structure, forms a complex composed of PxpA, PxpB and PxpC.

The enzyme catalyses 5-oxo-L-proline + ATP + 2 H2O = L-glutamate + ADP + phosphate + H(+). Catalyzes the cleavage of 5-oxoproline to form L-glutamate coupled to the hydrolysis of ATP to ADP and inorganic phosphate. The polypeptide is 5-oxoprolinase subunit A (Mycobacterium ulcerans (strain Agy99)).